A 470-amino-acid polypeptide reads, in one-letter code: Sorting nexin-17 (470 aa).

Residues 1 to 109 enclose the PX domain; the sequence is MHFSIPETES…SFLRRAQQET (109 aa). Arginine 36, serine 38, lysine 62, and arginine 75 together coordinate a 1,2-diacyl-sn-glycero-3-phospho-(1D-myo-inositol-3-phosphate). The region spanning 115-206 is the Ras-associating domain; that stretch reads EEVSLEVLLS…YKIVLRKSYW (92 aa). The segment at 115-432 is FERM-like; sequence EEVSLEVLLS…DASRESMVKL (318 aa). The interval 270 to 432 is PTB-like F3 module; it reads GYLRFDACVA…DASRESMVKL (163 aa). 7 positions are modified to phosphoserine: serine 336, serine 407, serine 409, serine 415, serine 421, serine 437, and serine 440. The tract at residues 401 to 426 is disordered; it reads GGTLRRSDSQQAVKSPPLLESPDASR.

The protein belongs to the sorting nexin family. Monomer. Interacts with APP (via cytoplasmic YXNPXY motif). Interacts with KIF1B. Interacts with the C-termini of P-selectin, PTC, LDLR, VLDLR, LRP1 and LRP8. Interacts with KRIT1 (via N-terminus). Interacts with HRAS. Interacts with ITGB1 and ITGB5 (via NPxY motif). Interacts with CCDC22 and CCDC93; the interaction associates SNX17 with the CCC complex. Interacts (via C-terminus) with VPS26C and VPS35L; the interactions are direct and associate SNX17 with the retriever complex. As to expression, detected in brain neurons (at protein level). Broadly expressed, with highest levels in brain and placenta, and lowest levels in colon, intestine and liver.

It is found in the cytoplasm. Its subcellular location is the early endosome. The protein resides in the cytoplasmic vesicle membrane. Its function is as follows. Critical regulator of endosomal recycling of numerous surface proteins, including integrins, signaling receptor and channels. Binds to NPxY sequences in the cytoplasmic tails of target cargos. Associates with retriever and CCC complexes to prevent lysosomal degradation and promote cell surface recycling of numerous cargos such as integrins ITGB1, ITGB5 and their associated alpha subunits. Also required for maintenance of normal cell surface levels of APP and LRP1. Interacts with membranes containing phosphatidylinositol 3-phosphate (PtdIns(3P)). The polypeptide is Sorting nexin-17 (Snx17) (Mus musculus (Mouse)).